Consider the following 285-residue polypeptide: Protein HtrL (285 aa).

The protein is Protein HtrL of Escherichia coli (strain K12).